The chain runs to 221 residues: MKIFLDTADVEEIRQGVAMGVVDGVTTNPSLAAKAGRNFRDVVLEIVEICPGPVSAETVALQADEIVREGRILAKWAPNIVVKVPLMAEGLKAVKQLTSEGIKTNVTLIFSASQALLAAKAGATFVSPFLGRLDDIGQDGMILIRDIVQIFKNYNIQTEVLAASIRHPVHVLQSALAGSHVATMPFKVLQQLVKHPLTDKGIETFLVDWQQVPDAATVFAE.

The active-site Schiff-base intermediate with substrate is K83.

Belongs to the transaldolase family. Type 3B subfamily.

The protein resides in the cytoplasm. The catalysed reaction is D-sedoheptulose 7-phosphate + D-glyceraldehyde 3-phosphate = D-erythrose 4-phosphate + beta-D-fructose 6-phosphate. Its pathway is carbohydrate degradation; pentose phosphate pathway; D-glyceraldehyde 3-phosphate and beta-D-fructose 6-phosphate from D-ribose 5-phosphate and D-xylulose 5-phosphate (non-oxidative stage): step 2/3. Transaldolase is important for the balance of metabolites in the pentose-phosphate pathway. This Herpetosiphon aurantiacus (strain ATCC 23779 / DSM 785 / 114-95) protein is Probable transaldolase.